Reading from the N-terminus, the 113-residue chain is uncharacterized protein (113 aa).

This is an uncharacterized protein from Escherichia coli (strain K12).